A 141-amino-acid chain; its full sequence is Large ribosomal subunit protein uL16 (141 aa).

The span at 1-16 (MLMPRKPPKGFRKPHH) shows a compositional bias: basic residues. Positions 1-27 (MLMPRKPPKGFRKPHHPDRSGASKGGN) are disordered.

It belongs to the universal ribosomal protein uL16 family. In terms of assembly, part of the 50S ribosomal subunit.

Binds 23S rRNA and is also seen to make contacts with the A and possibly P site tRNAs. The sequence is that of Large ribosomal subunit protein uL16 from Salinispora arenicola (strain CNS-205).